The primary structure comprises 334 residues: Glyceraldehyde-3-phosphate dehydrogenase (334 aa).

Residues 10-11 (RI), Asp-33, Lys-77, and Thr-119 contribute to the NAD(+) site. Residues 149–151 (SCT), Thr-180, 209–210 (TG), and Arg-232 each bind D-glyceraldehyde 3-phosphate. Catalysis depends on Cys-150, which acts as the Nucleophile. NAD(+) is bound at residue Asn-314.

The protein belongs to the glyceraldehyde-3-phosphate dehydrogenase family. As to quaternary structure, homotetramer.

It is found in the cytoplasm. It catalyses the reaction D-glyceraldehyde 3-phosphate + phosphate + NAD(+) = (2R)-3-phospho-glyceroyl phosphate + NADH + H(+). It functions in the pathway carbohydrate degradation; glycolysis; pyruvate from D-glyceraldehyde 3-phosphate: step 1/5. Functionally, catalyzes the oxidative phosphorylation of glyceraldehyde 3-phosphate (G3P) to 1,3-bisphosphoglycerate (BPG) using the cofactor NAD. The first reaction step involves the formation of a hemiacetal intermediate between G3P and a cysteine residue, and this hemiacetal intermediate is then oxidized to a thioester, with concomitant reduction of NAD to NADH. The reduced NADH is then exchanged with the second NAD, and the thioester is attacked by a nucleophilic inorganic phosphate to produce BPG. The protein is Glyceraldehyde-3-phosphate dehydrogenase (gap) of Chlamydia trachomatis serovar D (strain ATCC VR-885 / DSM 19411 / UW-3/Cx).